Consider the following 32-residue polypeptide: MSQITTKHITVLFRRWMAIICCLIIKIAYLAY.

This Yersinia enterocolitica serotype O:8 / biotype 1B (strain NCTC 13174 / 8081) protein is Yop proteins translocation protein A (yscA).